The primary structure comprises 198 residues: DnaJ homolog subfamily C member 5 (198 aa).

A phosphoserine mark is found at serine 8, serine 10, serine 12, and serine 15. In terms of domain architecture, J spans 13 to 82; sequence GESLYHVLGL…RNIYDKYGSL (70 aa). At tyrosine 17 the chain carries Phosphotyrosine. Lysine 56 is subject to N6-acetyllysine. Serine 151 carries the post-translational modification Phosphoserine.

As to quaternary structure, homodimer. Interacts with the chaperone complex consisting of HSC70 and SGTA. Interacts with ZDHHC13 (via ANK repeats). Interacts with ZDHHC17 (via ANK repeats). Interacts with SYT1, SYT5 and SYT7, and with SYT9, forming a complex with SNAP25. The interaction with SYT9 is stimulated tenfold in presence of calcium. Formation of the chaperone complex DNAJC5/HSC70 is not regulated by phosphorylation. Ser-10 phosphorylation induces an order-to-disorder transition triggering the interaction with Lys-58. This conformational switch modulates DNAJC5's cellular functions by reducing binding to syntaxin and synaptogamin without altering HSC70 interactions. In terms of processing, palmitoylated. Could be palmitoylated by DHHC3, DHHC7, DHHC15 and DHHC17. Palmitoylation occurs probably in the cysteine-rich domain and regulates DNAJC5 membrane attachment.

It is found in the cytoplasm. Its subcellular location is the cytosol. The protein resides in the membrane. It localises to the cytoplasmic vesicle. The protein localises to the secretory vesicle. It is found in the chromaffin granule membrane. Its subcellular location is the melanosome. The protein resides in the cell membrane. In terms of biological role, acts as a co-chaperone for the SNARE protein SNAP-25. Involved in the calcium-mediated control of a late stage of exocytosis. Acts as a general chaperone in regulated exocytosis. May have an important role in presynaptic function. May be involved in calcium-dependent neurotransmitter release at nerve endings. In Mus musculus (Mouse), this protein is DnaJ homolog subfamily C member 5.